Consider the following 247-residue polypeptide: 2,3-bisphosphoglycerate-dependent phosphoglycerate mutase (247 aa).

Residues 13–20 (RHGESDWN), 26–27 (TG), arginine 65, 92–95 (ERHY), lysine 103, 119–120 (RR), and 186–187 (GN) contribute to the substrate site. Residue histidine 14 is the Tele-phosphohistidine intermediate of the active site. Glutamate 92 serves as the catalytic Proton donor/acceptor.

It belongs to the phosphoglycerate mutase family. BPG-dependent PGAM subfamily. Homotetramer, dimer of dimers.

It carries out the reaction (2R)-2-phosphoglycerate = (2R)-3-phosphoglycerate. The protein operates within carbohydrate degradation; glycolysis; pyruvate from D-glyceraldehyde 3-phosphate: step 3/5. Its function is as follows. Catalyzes the interconversion of 2-phosphoglycerate and 3-phosphoglycerate. This Mycobacterium leprae (strain Br4923) protein is 2,3-bisphosphoglycerate-dependent phosphoglycerate mutase.